Here is an 88-residue protein sequence, read N- to C-terminus: Small ribosomal subunit protein bS20 (88 aa).

Belongs to the bacterial ribosomal protein bS20 family.

Functionally, binds directly to 16S ribosomal RNA. This Natranaerobius thermophilus (strain ATCC BAA-1301 / DSM 18059 / JW/NM-WN-LF) protein is Small ribosomal subunit protein bS20.